The chain runs to 220 residues: Large ribosomal subunit protein uL3 (220 aa).

Belongs to the universal ribosomal protein uL3 family. In terms of assembly, part of the 50S ribosomal subunit. Forms a cluster with proteins L14 and L19.

Its function is as follows. One of the primary rRNA binding proteins, it binds directly near the 3'-end of the 23S rRNA, where it nucleates assembly of the 50S subunit. In Staphylococcus haemolyticus (strain JCSC1435), this protein is Large ribosomal subunit protein uL3.